The primary structure comprises 98 residues: Defensin (98 aa).

Positions 1 to 19 (MRTFLVTFVLVVVVGVISA) are cleaved as a signal peptide. The propeptide occupies 20 to 58 (YPSNPVEVEAEDFDAQDPDLQTFQDTFYEVPQVHSRQKR). 3 disulfide bridges follow: Cys61-Cys88, Cys74-Cys94, and Cys78-Cys96.

As to expression, is synthesized by the fat body and eventually secreted into the hemolymph.

The protein resides in the secreted. Has antiparasitic activity against promastigote forms of L.major, and antibacterial activity against Gram-positive bacterium S.aureus. Has antifungal activity against the yeasts C.albicans and S.cerevisiae, but not C.glabrata. Has antifungal activity against filamentous fungi A.fumigatus, F.culmorum, F.oxysporum, N.crassa, T.viride and T.mentagrophytes, but not B.bassiana. The chain is Defensin from Phlebotomus duboscqi (Sandfly).